We begin with the raw amino-acid sequence, 60 residues long: Large ribosomal subunit protein bL32 (60 aa).

The segment at 1–47 (MAVQQNRKTRSKRGMRRSHDALTSSTLSTDPTTGEKHRRHHVTADGF) is disordered. Residues 7–16 (RKTRSKRGMR) are compositionally biased toward basic residues.

Belongs to the bacterial ribosomal protein bL32 family.

In Teredinibacter turnerae (strain ATCC 39867 / T7901), this protein is Large ribosomal subunit protein bL32.